We begin with the raw amino-acid sequence, 310 residues long: Glutaminase 1 (310 aa).

Substrate contacts are provided by S66, N117, E161, N168, Y192, Y244, and V262. Residue K294 is modified to N6-acetyllysine.

It belongs to the glutaminase family. Homotetramer.

It catalyses the reaction L-glutamine + H2O = L-glutamate + NH4(+). In Escherichia coli (strain K12), this protein is Glutaminase 1.